We begin with the raw amino-acid sequence, 439 residues long: Telomeric repeat-binding factor 1 (439 aa).

Residues 1-36 (MAEDVSSAAPSPRGCADGRDADPTEEQMAETERNDE) are disordered. Ala-2 is modified (N-acetylalanine). Ser-11 carries the phosphoserine modification. The segment covering 23 to 36 (PTEEQMAETERNDE) has biased composition (acidic residues). The interval 58 to 268 (EEEEEDAGLV…AAAKVVESKR (211 aa)) is TRFH mediates dimerization. A Glycyl lysine isopeptide (Lys-Gly) (interchain with G-Cter in SUMO2) cross-link involves residue Lys-213. A Phosphoserine; by ATM modification is found at Ser-219. The interval 265-378 (ESKRTRTITS…PVTPEKHRAR (114 aa)) is interaction with RLIM. Residues 266–311 (SKRTRTITSQDKPSGNDVEMETEANLDTRKSVSDKQSAVTESSEGT) form a disordered region. Polar residues predominate over residues 299-311 (DKQSAVTESSEGT). A Glycyl lysine isopeptide (Lys-Gly) (interchain with G-Cter in SUMO2) cross-link involves residue Lys-325. The tract at residues 326–375 (LQHGTQQQDLNKKERRVGTPQSTKKKKESRRATESRIPVSKSQPVTPEKH) is disordered. The Nuclear localization signal signature appears at 337-356 (KKERRVGTPQSTKKKKESRR). Lys-366 participates in a covalent cross-link: Glycyl lysine isopeptide (Lys-Gly) (interchain with G-Cter in SUMO2). The region spanning 375–432 (HRARKRQAWLWEEDKNLRSGVRKYGEGNWSKILLHYKFNNRTSVMLKDRWRTMKKLKL) is the HTH myb-type domain. Positions 403 to 428 (WSKILLHYKFNNRTSVMLKDRWRTMK) form a DNA-binding region, H-T-H motif.

In terms of assembly, homodimer; can contain both isoforms. Found in a complex with POT1; TINF2 and TNKS1. Interacts with ATM, TINF2, TNKS1, TNKS2, PINX1, NEK2 and MAPRE1. Component of the shelterin complex (telosome) composed of TERF1, TERF2, TINF2, TERF2IP ACD and POT1. Interacts with RLIM (via N-terminus). Interacts with FBXO4. Interaction with TINF2 protects against interaction with FBXO4 and subsequent polyubiquitination and proteasomal degradation. Interacts with GNL3L; this interaction promotes homodimerization. Interacts with TIN2. Interacts with RTEL1. Interactions with GNL3L and TIN2 are mutually exclusive. Interacts with CCDC79/TERB1. Interacts with TRIOBP isoform 1; mediates TERF1 localization to the centrosome. Phosphorylated preferentially on Ser-219 in an ATM-dependent manner in response to ionizing DNA damage. Post-translationally, ADP-ribosylation by TNKS1 or TNKS2 diminishes its ability to bind to telomeric DNA. In terms of processing, ubiquitinated by RLIM/RNF12, leading to its degradation by the proteasome. Ubiquitinated by a SCF (SKP1-CUL1-F-box protein) ubiquitin-protein ligase complex, leading to its degradation by the proteasome. In terms of tissue distribution, highly expressed and ubiquitous. Isoform Pin2 predominates.

The protein resides in the nucleus. The protein localises to the cytoplasm. It is found in the cytoskeleton. Its subcellular location is the spindle. It localises to the chromosome. The protein resides in the telomere. Binds the telomeric double-stranded 5'-TTAGGG-3' repeat and negatively regulates telomere length. Involved in the regulation of the mitotic spindle. Component of the shelterin complex (telosome) that is involved in the regulation of telomere length and protection. Shelterin associates with arrays of double-stranded 5'-TTAGGG-3' repeats added by telomerase and protects chromosome ends; without its protective activity, telomeres are no longer hidden from the DNA damage surveillance and chromosome ends are inappropriately processed by DNA repair pathways. This Homo sapiens (Human) protein is Telomeric repeat-binding factor 1 (TERF1).